Here is a 308-residue protein sequence, read N- to C-terminus: 1D-myo-inositol 2-acetamido-2-deoxy-alpha-D-glucopyranoside deacetylase (308 aa).

Residues histidine 37, aspartate 40, and histidine 171 each contribute to the Zn(2+) site.

This sequence belongs to the MshB deacetylase family. Zn(2+) serves as cofactor.

The enzyme catalyses 1D-myo-inositol 2-acetamido-2-deoxy-alpha-D-glucopyranoside + H2O = 1D-myo-inositol 2-amino-2-deoxy-alpha-D-glucopyranoside + acetate. Functionally, catalyzes the deacetylation of 1D-myo-inositol 2-acetamido-2-deoxy-alpha-D-glucopyranoside (GlcNAc-Ins) in the mycothiol biosynthesis pathway. In Mycobacterium sp. (strain JLS), this protein is 1D-myo-inositol 2-acetamido-2-deoxy-alpha-D-glucopyranoside deacetylase.